Here is a 498-residue protein sequence, read N- to C-terminus: NADPH:adrenodoxin oxidoreductase, mitochondrial (498 aa).

Residues 1 to 37 constitute a mitochondrion transit peptide; sequence MSTHKAALCKVQILKLFLISARCVRITRFYGVCGLST. Residues alanine 54, glutamate 75, leucine 83, and valine 119 each contribute to the FAD site. NADP(+) is bound by residues 190–193, 234–235, and glutamate 246; these read QGNV and RR. Residues tryptophan 404 and 411–413 each bind FAD; that span reads GVI. NADP(+) is bound at residue glycine 411. Residues 469 to 488 show a composition bias toward basic and acidic residues; sequence DSEETRRGETRGKPREKMLD. Residues 469 to 489 form a disordered region; the sequence is DSEETRRGETRGKPREKMLDV.

It belongs to the ferredoxin--NADP reductase type 1 family. Requires FAD as cofactor.

It localises to the mitochondrion inner membrane. It catalyses the reaction 2 reduced [adrenodoxin] + NADP(+) + H(+) = 2 oxidized [adrenodoxin] + NADPH. Its pathway is steroid metabolism; cholesterol metabolism. Serves as the first electron transfer protein in all the mitochondrial P450 systems including cholesterol side chain cleavage in all steroidogenic tissues, steroid 11-beta hydroxylation in the adrenal cortex, 25-OH-vitamin D3-24 hydroxylation in the kidney, and sterol C-27 hydroxylation in the liver. This is NADPH:adrenodoxin oxidoreductase, mitochondrial (fdxr) from Salvelinus fontinalis (Brook trout).